A 126-amino-acid polypeptide reads, in one-letter code: Urease subunit beta (126 aa).

This sequence belongs to the urease beta subunit family. As to quaternary structure, heterotrimer of UreA (gamma), UreB (beta) and UreC (alpha) subunits. Three heterotrimers associate to form the active enzyme.

It is found in the cytoplasm. It carries out the reaction urea + 2 H2O + H(+) = hydrogencarbonate + 2 NH4(+). The protein operates within nitrogen metabolism; urea degradation; CO(2) and NH(3) from urea (urease route): step 1/1. The chain is Urease subunit beta from Sporosarcina pasteurii (Bacillus pasteurii).